A 460-amino-acid chain; its full sequence is Ribosomal protein uS12 methylthiotransferase RimO (460 aa).

The MTTase N-terminal domain occupies 17–128; the sequence is PAVAVLHLGC…IVQVIQRAER (112 aa). [4Fe-4S] cluster is bound by residues C26, C62, C91, C166, C170, and C173. A Radical SAM core domain is found at 152 to 381; sequence TTHAPVAYLR…MQLQQGIAFR (230 aa). In terms of domain architecture, TRAM spans 384 to 450; the sequence is REQVGQVVPV…PYDLFGQVVE (67 aa).

It belongs to the methylthiotransferase family. RimO subfamily. [4Fe-4S] cluster is required as a cofactor.

It localises to the cytoplasm. The catalysed reaction is L-aspartate(89)-[ribosomal protein uS12]-hydrogen + (sulfur carrier)-SH + AH2 + 2 S-adenosyl-L-methionine = 3-methylsulfanyl-L-aspartate(89)-[ribosomal protein uS12]-hydrogen + (sulfur carrier)-H + 5'-deoxyadenosine + L-methionine + A + S-adenosyl-L-homocysteine + 2 H(+). Functionally, catalyzes the methylthiolation of an aspartic acid residue of ribosomal protein uS12. The sequence is that of Ribosomal protein uS12 methylthiotransferase RimO from Synechococcus sp. (strain JA-3-3Ab) (Cyanobacteria bacterium Yellowstone A-Prime).